The sequence spans 191 residues: dTTP/UTP pyrophosphatase (191 aa).

Asp-69 functions as the Proton acceptor in the catalytic mechanism.

This sequence belongs to the Maf family. YhdE subfamily. A divalent metal cation serves as cofactor.

Its subcellular location is the cytoplasm. It catalyses the reaction dTTP + H2O = dTMP + diphosphate + H(+). The enzyme catalyses UTP + H2O = UMP + diphosphate + H(+). In terms of biological role, nucleoside triphosphate pyrophosphatase that hydrolyzes dTTP and UTP. May have a dual role in cell division arrest and in preventing the incorporation of modified nucleotides into cellular nucleic acids. This Pelotomaculum thermopropionicum (strain DSM 13744 / JCM 10971 / SI) protein is dTTP/UTP pyrophosphatase.